The following is a 330-amino-acid chain: Aspartate--ammonia ligase (330 aa).

It belongs to the class-II aminoacyl-tRNA synthetase family. AsnA subfamily.

The protein resides in the cytoplasm. It carries out the reaction L-aspartate + NH4(+) + ATP = L-asparagine + AMP + diphosphate + H(+). Its pathway is amino-acid biosynthesis; L-asparagine biosynthesis; L-asparagine from L-aspartate (ammonia route): step 1/1. The protein is Aspartate--ammonia ligase of Actinobacillus succinogenes (strain ATCC 55618 / DSM 22257 / CCUG 43843 / 130Z).